Here is a 675-residue protein sequence, read N- to C-terminus: Methionine--tRNA ligase (675 aa).

The 'HIGH' region signature appears at Pro15 to His25. Zn(2+) is bound by residues Cys146, Cys149, Cys159, and Cys162. Positions Lys332–Ser336 match the 'KMSKS' region motif. Lys335 contacts ATP. In terms of domain architecture, tRNA-binding spans Asp573–Lys675.

This sequence belongs to the class-I aminoacyl-tRNA synthetase family. MetG type 1 subfamily. As to quaternary structure, homodimer. Zn(2+) serves as cofactor.

Its subcellular location is the cytoplasm. The enzyme catalyses tRNA(Met) + L-methionine + ATP = L-methionyl-tRNA(Met) + AMP + diphosphate. Its function is as follows. Is required not only for elongation of protein synthesis but also for the initiation of all mRNA translation through initiator tRNA(fMet) aminoacylation. The sequence is that of Methionine--tRNA ligase from Yersinia pseudotuberculosis serotype I (strain IP32953).